Here is a 590-residue protein sequence, read N- to C-terminus: Leucine-rich repeat transmembrane neuronal protein 4 (590 aa).

Residues methionine 1 to alanine 30 form the signal peptide. Positions glutamine 31–glycine 61 constitute an LRRNT domain. The Extracellular portion of the chain corresponds to glutamine 31–lysine 424. Asparagine 58 is a glycosylation site (N-linked (GlcNAc...) asparagine). 10 LRR repeats span residues glycine 62 to glycine 83, glutamine 86 to glycine 107, arginine 110 to proline 131, asparagine 134 to glycine 155, lysine 158 to aspartate 179, asparagine 182 to glycine 203, lysine 206 to proline 226, asparagine 230 to threonine 251, serine 254 to cysteine 275, and asparagine 278 to alanine 299. N-linked (GlcNAc...) asparagine glycosylation is present at asparagine 126. An N-linked (GlcNAc...) asparagine glycan is attached at asparagine 291. Positions asparagine 311 to glutamate 362 constitute an LRRCT domain. Residues isoleucine 425 to valine 445 form a helical membrane-spanning segment. At serine 446–asparagine 590 the chain is on the cytoplasmic side.

The protein belongs to the LRRTM family. Peripherally associated with AMPAR complex. AMPAR complex consists of an inner core made of 4 pore-forming GluA/GRIA proteins (GRIA1, GRIA2, GRIA3 and GRIA4) and 4 major auxiliary subunits arranged in a twofold symmetry. One of the two pairs of distinct binding sites is occupied either by CNIH2, CNIH3 or CACNG2, CACNG3. The other harbors CACNG2, CACNG3, CACNG4, CACNG8 or GSG1L. This inner core of AMPAR complex is complemented by outer core constituents binding directly to the GluA/GRIA proteins at sites distinct from the interaction sites of the inner core constituents. Outer core constituents include at least PRRT1, PRRT2, CKAMP44/SHISA9, FRRS1L and NRN1. The proteins of the inner and outer core serve as a platform for other, more peripherally associated AMPAR constituents, including LRRTM4. Alone or in combination, these auxiliary subunits control the gating and pharmacology of the AMPAR complex and profoundly impact their biogenesis and protein processing. Expressed in neuronal tissues.

It is found in the cell membrane. The protein localises to the postsynaptic cell membrane. Functionally, may play a role in the development and maintenance of the vertebrate nervous system. Exhibits strong synaptogenic activity, restricted to excitatory presynaptic differentiation. This Homo sapiens (Human) protein is Leucine-rich repeat transmembrane neuronal protein 4 (LRRTM4).